Reading from the N-terminus, the 548-residue chain is ATP synthase subunit alpha, mitochondrial (548 aa).

Residue Gly209 to Thr216 coordinates ATP.

This sequence belongs to the ATPase alpha/beta chains family. In terms of assembly, F-type ATPases have 2 components, CF(1) - the catalytic core - and CF(0) - the membrane proton channel. CF(1) has five subunits: alpha(3), beta(3), gamma(1), delta(1), epsilon(1). CF(0) has three main subunits: a, b and c.

It is found in the mitochondrion. The protein resides in the mitochondrion inner membrane. Mitochondrial membrane ATP synthase (F(1)F(0) ATP synthase or Complex V) produces ATP from ADP in the presence of a proton gradient across the membrane which is generated by electron transport complexes of the respiratory chain. F-type ATPases consist of two structural domains, F(1) - containing the extramembraneous catalytic core, and F(0) - containing the membrane proton channel, linked together by a central stalk and a peripheral stalk. During catalysis, ATP synthesis in the catalytic domain of F(1) is coupled via a rotary mechanism of the central stalk subunits to proton translocation. Subunits alpha and beta form the catalytic core in F(1). Rotation of the central stalk against the surrounding alpha(3)beta(3) subunits leads to hydrolysis of ATP in three separate catalytic sites on the beta subunits. Subunit alpha does not bear the catalytic high-affinity ATP-binding sites. This Kluyveromyces lactis (strain ATCC 8585 / CBS 2359 / DSM 70799 / NBRC 1267 / NRRL Y-1140 / WM37) (Yeast) protein is ATP synthase subunit alpha, mitochondrial (ATP1).